The primary structure comprises 144 residues: 3-dehydroquinate dehydratase (144 aa).

Residue Tyr24 is the Proton acceptor of the active site. Substrate-binding residues include Asn76, His82, and Asp89. Catalysis depends on His102, which acts as the Proton donor. Residues 103–104 (LS) and Arg113 each bind substrate.

It belongs to the type-II 3-dehydroquinase family. In terms of assembly, homododecamer.

The catalysed reaction is 3-dehydroquinate = 3-dehydroshikimate + H2O. It functions in the pathway metabolic intermediate biosynthesis; chorismate biosynthesis; chorismate from D-erythrose 4-phosphate and phosphoenolpyruvate: step 3/7. In terms of biological role, catalyzes a trans-dehydration via an enolate intermediate. The sequence is that of 3-dehydroquinate dehydratase from Bordetella petrii (strain ATCC BAA-461 / DSM 12804 / CCUG 43448).